Consider the following 428-residue polypeptide: GTPase Obg (428 aa).

Residues 1–158 (MFIDQVKIYV…RDVILELKVL (158 aa)) enclose the Obg domain. The OBG-type G domain maps to 159–329 (ADVGLVGFPS…LLFEVANLIE (171 aa)). Residues 165–172 (GFPSVGKS), 190–194 (FTTIV), 212–215 (DLPG), 282–285 (NKMD), and 310–312 (SAV) each bind GTP. Mg(2+) is bound by residues S172 and T192. Positions 350–428 (KFETEGVKFD…ILEYEFEFID (79 aa)) constitute an OCT domain.

It belongs to the TRAFAC class OBG-HflX-like GTPase superfamily. OBG GTPase family. In terms of assembly, monomer. Mg(2+) serves as cofactor.

It is found in the cytoplasm. Its function is as follows. An essential GTPase which binds GTP, GDP and possibly (p)ppGpp with moderate affinity, with high nucleotide exchange rates and a fairly low GTP hydrolysis rate. Plays a role in control of the cell cycle, stress response, ribosome biogenesis and in those bacteria that undergo differentiation, in morphogenesis control. The protein is GTPase Obg of Bacillus anthracis.